Consider the following 277-residue polypeptide: Sulfur carrier protein FdhD (277 aa).

Residue cysteine 123 is the Cysteine persulfide intermediate of the active site. Residue phenylalanine 263–lysine 268 coordinates Mo-bis(molybdopterin guanine dinucleotide).

The protein belongs to the FdhD family.

The protein localises to the cytoplasm. Its function is as follows. Required for formate dehydrogenase (FDH) activity. Acts as a sulfur carrier protein that transfers sulfur from IscS to the molybdenum cofactor prior to its insertion into FDH. In Corynebacterium efficiens (strain DSM 44549 / YS-314 / AJ 12310 / JCM 11189 / NBRC 100395), this protein is Sulfur carrier protein FdhD.